The primary structure comprises 81 residues: Small ribosomal subunit protein bS18 (81 aa).

It belongs to the bacterial ribosomal protein bS18 family. In terms of assembly, part of the 30S ribosomal subunit. Forms a tight heterodimer with protein bS6.

Its function is as follows. Binds as a heterodimer with protein bS6 to the central domain of the 16S rRNA, where it helps stabilize the platform of the 30S subunit. The chain is Small ribosomal subunit protein bS18 from Chlamydia trachomatis serovar L2 (strain ATCC VR-902B / DSM 19102 / 434/Bu).